The chain runs to 566 residues: MELETSVYRPNAAVYDSPDGVEVRGRYDQVFAKILTREALGFVAELQRDVSLGMLRYAWSAVERQNVVTTFVLSLGLTLPLSSSEIGEWVCSVCSPPAVADRRVEITGPVERKMIINALNSGAKVFMADFEDALSPSWENLMKGQVNLKDAVDGTITFHDKARNKVYKLNDQVAKLFVRPRGWHLPEAHILIDGEPAIGCLVDFGLYFFHNYSKFRQTQGSGYGPFFYLPKMEHSREAKIWNSVFERAEKMAGIERGSIRATVLIETLPAVFQMNEILYELRDHSVGLNCGRWDYIFSYVKTFQAHPDRLLPDRVLVGMGQHFMRSYSDLLIRTCHKRGVHAWEGMAAQIAIRDDPKANDMALDLVKKDKLRQVRAGHDGTWAAHPGLIPICMDAFGHMGKNPNQIKSMKRDDASAITEEDLLQIPRGVRTLDGLRLNTRVGIQYLAAWLTGSGSVPLYNLTDEDAATAEISRVQNWQWIRYGVELKRRTGLEVRVSKELFGRVVEEEMERIEKEVGKERSLREECIRKLARCLQSSVTAAELDDFLTLAVYDHIVAHYPINVSRL.

The Proton acceptor role is filled by Arg-179. The active-site Proton donor is the Asp-465. Residues 564 to 566 (SRL) carry the Microbody targeting signal motif.

It belongs to the malate synthase family.

It localises to the glyoxysome. It catalyses the reaction glyoxylate + acetyl-CoA + H2O = (S)-malate + CoA + H(+). It functions in the pathway carbohydrate metabolism; glyoxylate cycle; (S)-malate from isocitrate: step 2/2. In Raphanus sativus (Radish), this protein is Malate synthase, glyoxysomal (MLS).